The following is an 865-amino-acid chain: NBPF family member NBPF11 (865 aa).

Residues Met70–Leu130 are a coiled coil. The interval Lys161–Pro200 is disordered. The span at Glu165–Lys181 shows a compositional bias: acidic residues. The 95-residue stretch at Glu165–Pro259 folds into the Olduvai 1 domain. The segment covering Glu190–Pro200 has biased composition (basic and acidic residues). The stretch at Lys339 to Leu401 forms a coiled coil. Olduvai domains lie at Glu436–Pro528, Glu529–Pro617, Ser620–Asp675, Glu676–Pro767, and Ser770–Cys865. 2 disordered regions span residues Ala450–Leu475 and Trp520–Thr567. Composition is skewed to acidic residues over residues Asn530–Glu539 and Glu550–Asp562. The tract at residues Arg829 to Cys865 is disordered. A compositionally biased stretch (basic and acidic residues) spans Arg833 to Lys850.

It belongs to the NBPF family. As to expression, expressed in spinal cord.

The protein localises to the cytoplasm. This is NBPF family member NBPF11 from Homo sapiens (Human).